The primary structure comprises 939 residues: AP-2 complex subunit alpha-2 (939 aa).

A 1,2-diacyl-sn-glycero-3-phospho-(1D-myo-inositol-3,4,5-trisphosphate) is bound by residues 11-12 (RG), lysine 43, tyrosine 53, and 57-61 (KYVCK). The segment at 612-681 (LAKLKKKKGP…AGPPPSSGGS (70 aa)) is disordered. A compositionally biased stretch (low complexity) spans 646–667 (PASTSAVSTPSPSADLLGLGAA). Residues 668–677 (PPAPAGPPPS) show a composition bias toward pro residues.

The protein belongs to the adaptor complexes large subunit family. As to quaternary structure, adaptor protein complex 2 (AP-2) is a heterotetramer composed of two large adaptins (alpha-type subunit AP2A1 or AP2A2 and beta-type subunit AP2B1), a medium adaptin (mu-type subunit AP2M1) and a small adaptin (sigma-type subunit AP2S1). Binds EPN1, EPS15, AMPH, SNAP91 and BIN1. Interacts with HIP1. Interacts with DGKD. Interacts with DENND1A, DENND1B and DENND1C. Interacts with FCHO1 and DAB2. Interacts with ATAT1; this interaction is required for efficient alpha-tubulin acetylation by ATAT1. Interacts with KIAA1107. Together with AP2B1 and AP2M1, it interacts with ADAM10; this interaction facilitates ADAM10 endocytosis from the plasma membrane during long-term potentiation in hippocampal neurons. Interacts with CLN3 (via dileucine motif). Interacts with ABCB11; this interaction regulates cell membrane expression of ABCB11 through its internalization in a clathrin-dependent manner and its subsequent degradation. Interacts with Cacfd1. Interacts with DNAJC6. Expressed in the brain (at protein level).

The protein resides in the cell membrane. Its subcellular location is the membrane. The protein localises to the coated pit. Component of the adaptor protein complex 2 (AP-2). Adaptor protein complexes function in protein transport via transport vesicles in different membrane traffic pathways. Adaptor protein complexes are vesicle coat components and appear to be involved in cargo selection and vesicle formation. AP-2 is involved in clathrin-dependent endocytosis in which cargo proteins are incorporated into vesicles surrounded by clathrin (clathrin-coated vesicles, CCVs) which are destined for fusion with the early endosome. The clathrin lattice serves as a mechanical scaffold but is itself unable to bind directly to membrane components. Clathrin-associated adaptor protein (AP) complexes which can bind directly to both the clathrin lattice and to the lipid and protein components of membranes are considered to be the major clathrin adaptors contributing the CCV formation. AP-2 also serves as a cargo receptor to selectively sort the membrane proteins involved in receptor-mediated endocytosis. AP-2 seems to play a role in the recycling of synaptic vesicle membranes from the presynaptic surface. AP-2 recognizes Y-X-X-[FILMV] (Y-X-X-Phi) and [ED]-X-X-X-L-[LI] endocytosis signal motifs within the cytosolic tails of transmembrane cargo molecules. AP-2 may also play a role in maintaining normal post-endocytic trafficking through the ARF6-regulated, non-clathrin pathway. During long-term potentiation in hippocampal neurons, AP-2 is responsible for the endocytosis of ADAM10. The AP-2 alpha subunit binds polyphosphoinositide-containing lipids, positioning AP-2 on the membrane. The AP-2 alpha subunit acts via its C-terminal appendage domain as a scaffolding platform for endocytic accessory proteins. The AP-2 alpha and AP-2 sigma subunits are thought to contribute to the recognition of the [ED]-X-X-X-L-[LI] motif. The sequence is that of AP-2 complex subunit alpha-2 (AP2A2) from Homo sapiens (Human).